The primary structure comprises 401 residues: Nicotinate phosphoribosyltransferase (401 aa).

Histidine 221 carries the post-translational modification Phosphohistidine; by autocatalysis.

Belongs to the NAPRTase family. Post-translationally, transiently phosphorylated on a His residue during the reaction cycle. Phosphorylation strongly increases the affinity for substrates and increases the rate of nicotinate D-ribonucleotide production. Dephosphorylation regenerates the low-affinity form of the enzyme, leading to product release.

The catalysed reaction is nicotinate + 5-phospho-alpha-D-ribose 1-diphosphate + ATP + H2O = nicotinate beta-D-ribonucleotide + ADP + phosphate + diphosphate. It participates in cofactor biosynthesis; NAD(+) biosynthesis; nicotinate D-ribonucleotide from nicotinate: step 1/1. Functionally, catalyzes the synthesis of beta-nicotinate D-ribonucleotide from nicotinate and 5-phospho-D-ribose 1-phosphate at the expense of ATP. The protein is Nicotinate phosphoribosyltransferase of Pectobacterium atrosepticum (strain SCRI 1043 / ATCC BAA-672) (Erwinia carotovora subsp. atroseptica).